The following is a 507-amino-acid chain: Putative propionyl-CoA carboxylase beta chain (507 aa).

Residues 1-25 (MNEHMDHFYTKRKQAEEGGGREKLA) are compositionally biased toward basic and acidic residues. Residues 1–30 (MNEHMDHFYTKRKQAEEGGGREKLAQQRQK) form a disordered region. In terms of domain architecture, CoA carboxyltransferase N-terminal spans 1–254 (MNEHMDHFYT…NGRTTEPKPE (254 aa)). The segment at 1–501 (MNEHMDHFYT…HKTEERPKKK (501 aa)) is carboxyltransferase. One can recognise a CoA carboxyltransferase C-terminal domain in the interval 256–501 (EASRPLLNRL…HKTEERPKKK (246 aa)).

Belongs to the AccD/PCCB family. Probably a dodecamer composed of six biotin-containing alpha subunits and six beta subunits.

It catalyses the reaction propanoyl-CoA + hydrogencarbonate + ATP = (S)-methylmalonyl-CoA + ADP + phosphate + H(+). It functions in the pathway metabolic intermediate metabolism; propanoyl-CoA degradation; succinyl-CoA from propanoyl-CoA: step 1/3. This chain is Putative propionyl-CoA carboxylase beta chain (yqjD), found in Bacillus subtilis (strain 168).